Here is a 90-residue protein sequence, read N- to C-terminus: Alpha-latrotoxin associated low molecular weight protein (90 aa).

The signal sequence occupies residues 1 to 18 (MNKLFFVVFLCLIISVLA).

It belongs to the arthropod CHH/MIH/GIH/VIH hormone family. Expressed by the venom gland.

Its subcellular location is the secreted. Functionally, may increase the toxicity of alpha-latrotoxin and/or other venom components. Is non-toxic to mice and to the cockroach Periplaneta americana. In Latrodectus geometricus (Brown widow spider), this protein is Alpha-latrotoxin associated low molecular weight protein.